Consider the following 228-residue polypeptide: Prophenin-2 (228 aa).

Positions 1-29 are cleaved as a signal peptide; it reads METQRASLCLGRWSLWLLLLALVVPSASA. A propeptide spanning residues 30–146 is cleaved from the precursor; the sequence is QALSYREAVL…FLRRPRLRRQ (117 aa). 2 cysteine pairs are disulfide-bonded: cysteine 85–cysteine 96 and cysteine 107–cysteine 124. Repeat copies occupy residues 148 to 157, 158 to 167, 168 to 177, 178 to 187, 188 to 197, 198 to 207, and 208 to 217. Residues 148 to 217 form a 7 X 10 AA tandem repeats region; it reads FPPPNVPGPR…FPPPPPFRPP (70 aa). Disordered regions lie at residues 167 to 195 and 207 to 228; these read RFPP…NFPG and WFPP…PGRR. Proline 225 is modified (proline amide). The propeptide at 226–228 is removed in mature form; the sequence is GRR.

This sequence belongs to the cathelicidin family.

It is found in the secreted. In terms of biological role, exerts antimicrobial activity. It is more effective against Gram-negative bacteria than Gram-positive bacteria. This chain is Prophenin-2, found in Sus scrofa (Pig).